Consider the following 187-residue polypeptide: Elongation factor P (187 aa).

This sequence belongs to the elongation factor P family.

Its subcellular location is the cytoplasm. The protein operates within protein biosynthesis; polypeptide chain elongation. Its function is as follows. Involved in peptide bond synthesis. Stimulates efficient translation and peptide-bond synthesis on native or reconstituted 70S ribosomes in vitro. Probably functions indirectly by altering the affinity of the ribosome for aminoacyl-tRNA, thus increasing their reactivity as acceptors for peptidyl transferase. The protein is Elongation factor P of Pseudarthrobacter chlorophenolicus (strain ATCC 700700 / DSM 12829 / CIP 107037 / JCM 12360 / KCTC 9906 / NCIMB 13794 / A6) (Arthrobacter chlorophenolicus).